Reading from the N-terminus, the 134-residue chain is UPF0412 protein YaaI (134 aa).

The first 23 residues, 1 to 23, serve as a signal peptide directing secretion; sequence MRSVLTISVGLLFGLALSSVAHA.

The protein belongs to the UPF0412 family.

The chain is UPF0412 protein YaaI from Salmonella typhimurium (strain LT2 / SGSC1412 / ATCC 700720).